Here is a 648-residue protein sequence, read N- to C-terminus: Macrolide export ATP-binding/permease protein MacB (648 aa).

The Cytoplasmic segment spans residues 1-272; sequence MTPLLELKDI…RALAANKMRT (272 aa). In terms of domain architecture, ABC transporter spans 5 to 243; it reads LELKDIRRSY…TGGTEPVVNT (239 aa). 41 to 48 is an ATP binding site; it reads GASGSGKS. Residues 273 to 293 traverse the membrane as a helical segment; that stretch reads LLTMLGIIIGIASVVSIVVVG. Residues 294–522 lie on the Periplasmic side of the membrane; the sequence is DAAKQMVLAD…TVEKTTRTLQ (229 aa). Residues 523 to 543 traverse the membrane as a helical segment; it reads LFLTLVAVISLVVGGIGVMNI. The Cytoplasmic portion of the chain corresponds to 544-575; that stretch reads MLVSVTERTREIGIRMAVGARASDVLQQFLIE. Residues 576 to 596 form a helical membrane-spanning segment; the sequence is AVLVCLVGGALGITLSLLIAF. Residues 597-610 are Periplasmic-facing; that stretch reads TLQLFLPGWEIGFS. A helical transmembrane segment spans residues 611-631; that stretch reads PLALLLAFLCSTVTGILFGWL. The Cytoplasmic segment spans residues 632 to 648; it reads PARNAARLDPVDALARE.

Belongs to the ABC transporter superfamily. Macrolide exporter (TC 3.A.1.122) family. Homodimer. Part of the tripartite efflux system MacAB-TolC, which is composed of an inner membrane transporter, MacB, a periplasmic membrane fusion protein, MacA, and an outer membrane component, TolC. The complex forms a large protein conduit and can translocate molecules across both the inner and outer membranes. Interacts with MacA.

It is found in the cell inner membrane. Its activity is regulated as follows. ATPase activity is stimulated by interaction with MacA and inhibited by vanadate. Part of the tripartite efflux system MacAB-TolC. MacB is a non-canonical ABC transporter that contains transmembrane domains (TMD), which form a pore in the inner membrane, and an ATP-binding domain (NBD), which is responsible for energy generation. When overexpressed, the system confers resistance against macrolides composed of 14- and 15-membered lactones but no or weak resistance against 16-membered ones. In addition, the system could also transport R-LPS or a similar glycolipid. The chain is Macrolide export ATP-binding/permease protein MacB from Escherichia coli (strain K12).